Consider the following 280-residue polypeptide: Orotidine 5'-phosphate decarboxylase (280 aa).

The active-site Proton donor is the lysine 97.

This sequence belongs to the OMP decarboxylase family. Type 2 subfamily.

It carries out the reaction orotidine 5'-phosphate + H(+) = UMP + CO2. It participates in pyrimidine metabolism; UMP biosynthesis via de novo pathway; UMP from orotate: step 2/2. In Corynebacterium efficiens (strain DSM 44549 / YS-314 / AJ 12310 / JCM 11189 / NBRC 100395), this protein is Orotidine 5'-phosphate decarboxylase (pyrF).